Reading from the N-terminus, the 138-residue chain is Basic phospholipase A2 homolog Vur-S49 (138 aa).

The signal sequence occupies residues M1–G16. Disulfide bonds link C42/C131, C44/C60, C59/C111, C65/C138, C66/C104, C73/C97, and C91/C102. An important for membrane-damaging activities in eukaryotes and bacteria; heparin-binding region spans residues K121 to G133.

The protein belongs to the phospholipase A2 family. Group II subfamily. S49 sub-subfamily. In terms of tissue distribution, expressed by the venom gland.

It localises to the secreted. Snake venom phospholipase A2 homolog that lacks enzymatic activity. Is able to suppress the acetylcholine (ACh)-evoked current mediated by alpha-7 (CHRNA7)-similar nAChRs in L.stagnalis neurons (IC(50)=2.18 uM). This activity is only partially reversible and seems to be non-competitive. The sequence is that of Basic phospholipase A2 homolog Vur-S49 from Vipera renardi (Steppe viper).